The sequence spans 258 residues: MVLVRVVANLLILQLSYAQKVSELVVGGDECNINEHRSLVAIFNSTGFFCSGILLNQEWVLTASHCDSTNFQMKIGVHSKKTLNQDEQTRNPKEKIFCPNKKNDDALDKDLMLVRLDSPVSDSEHIAPLSLPSSPPSVGSVCRIMGWGSITPIQKTNPDVPHCANINLLDDAVCRAAYPELPAEYRTLCAGVPEGGIDTCNGDSGGPLICNGQFQGIVFYGAHPCGQAPKPGLYTKVIDYNTWIESVIAGNTAATCPP.

Residues 1-18 (MVLVRVVANLLILQLSYA) form the signal peptide. Positions 19 to 24 (QKVSEL) are excised as a propeptide. A Peptidase S1 domain is found at 25 to 249 (VVGGDECNIN…YNTWIESVIA (225 aa)). Cystine bridges form between C31–C163, C50–C66, C98–C256, C142–C210, C174–C189, and C200–C225. N44 carries N-linked (GlcNAc...) asparagine glycosylation. Active-site charge relay system residues include H65 and D110. The active-site Charge relay system is S204.

It belongs to the peptidase S1 family. Snake venom subfamily. As to quaternary structure, monomer. Post-translationally, N-glycosylated. Contains approximately 10% carbohydrates. Expressed by the venom gland.

It localises to the secreted. With respect to regulation, inhibited by benzamidine, PMSF, leupeptin, SDS and DTT, but not by EDTA, and commercial antivenom. In terms of biological role, snake venom serine protease that shows non-specific action on fibrinogen. It preferentially degrades fibrinogen Aalpha (FGA), releasing fibrinopeptide A, and shows a lower activity on fibrinogen Bbeta (FGB), releasing fibrinopeptide B and other uncommon fibrinopeptides. Also shows low fibrinolytic activity compared to plasmin. Has high enzymatic activity on the substrates for activated protein C and factor XIa, and for thrombin. Shows a wide activity spectrum at different peptide sequences, with a preferential cleavage at Lys-|-Xaa over Arg-|-Xaa bonds. The protein is Snake venom serine protease HS114 of Bothrops jararaca (Jararaca).